Consider the following 514-residue polypeptide: ATP synthase subunit alpha (514 aa).

170 to 177 (GDRQIGKT) is an ATP binding site.

It belongs to the ATPase alpha/beta chains family. In terms of assembly, F-type ATPases have 2 components, CF(1) - the catalytic core - and CF(0) - the membrane proton channel. CF(1) has five subunits: alpha(3), beta(3), gamma(1), delta(1), epsilon(1). CF(0) has three main subunits: a(1), b(2) and c(9-12). The alpha and beta chains form an alternating ring which encloses part of the gamma chain. CF(1) is attached to CF(0) by a central stalk formed by the gamma and epsilon chains, while a peripheral stalk is formed by the delta and b chains.

It is found in the cell inner membrane. The catalysed reaction is ATP + H2O + 4 H(+)(in) = ADP + phosphate + 5 H(+)(out). Produces ATP from ADP in the presence of a proton gradient across the membrane. The alpha chain is a regulatory subunit. This Pseudomonas putida (strain W619) protein is ATP synthase subunit alpha.